A 90-amino-acid polypeptide reads, in one-letter code: Probable Fe(2+)-trafficking protein (90 aa).

Belongs to the Fe(2+)-trafficking protein family.

In terms of biological role, could be a mediator in iron transactions between iron acquisition and iron-requiring processes, such as synthesis and/or repair of Fe-S clusters in biosynthetic enzymes. The polypeptide is Probable Fe(2+)-trafficking protein (Vibrio vulnificus (strain CMCP6)).